The sequence spans 326 residues: Aspartate--ammonia ligase (326 aa).

Belongs to the class-II aminoacyl-tRNA synthetase family. AsnA subfamily.

The protein resides in the cytoplasm. It carries out the reaction L-aspartate + NH4(+) + ATP = L-asparagine + AMP + diphosphate + H(+). Its pathway is amino-acid biosynthesis; L-asparagine biosynthesis; L-asparagine from L-aspartate (ammonia route): step 1/1. The sequence is that of Aspartate--ammonia ligase from Malacoplasma penetrans (strain HF-2) (Mycoplasma penetrans).